A 528-amino-acid polypeptide reads, in one-letter code: Alpha-amylase (528 aa).

Positions 1-28 are cleaved as a signal peptide; the sequence is MNKKWLNIPALIALLAAIAFGSVAPAEA. Ca(2+) is bound by residues Asn-168 and Asp-228. Asp-258 serves as the catalytic Nucleophile. His-262 serves as a coordination point for Ca(2+). The active-site Proton donor is Glu-286.

It belongs to the glycosyl hydrolase 13 family. In terms of assembly, monomer. Requires Ca(2+) as cofactor.

It carries out the reaction Endohydrolysis of (1-&gt;4)-alpha-D-glucosidic linkages in polysaccharides containing three or more (1-&gt;4)-alpha-linked D-glucose units.. This chain is Alpha-amylase, found in Niallia circulans (Bacillus circulans).